The chain runs to 337 residues: Nucleoid-associated protein Avin_11450 (337 aa).

The protein belongs to the YejK family.

It localises to the cytoplasm. The protein localises to the nucleoid. This Azotobacter vinelandii (strain DJ / ATCC BAA-1303) protein is Nucleoid-associated protein Avin_11450.